The following is a 215-amino-acid chain: Deoxyribose-phosphate aldolase (215 aa).

Catalysis depends on Asp-90, which acts as the Proton donor/acceptor. The Schiff-base intermediate with acetaldehyde role is filled by Lys-152. Lys-181 functions as the Proton donor/acceptor in the catalytic mechanism.

Belongs to the DeoC/FbaB aldolase family. DeoC type 1 subfamily.

The protein localises to the cytoplasm. It catalyses the reaction 2-deoxy-D-ribose 5-phosphate = D-glyceraldehyde 3-phosphate + acetaldehyde. It functions in the pathway carbohydrate degradation; 2-deoxy-D-ribose 1-phosphate degradation; D-glyceraldehyde 3-phosphate and acetaldehyde from 2-deoxy-alpha-D-ribose 1-phosphate: step 2/2. Its function is as follows. Catalyzes a reversible aldol reaction between acetaldehyde and D-glyceraldehyde 3-phosphate to generate 2-deoxy-D-ribose 5-phosphate. This is Deoxyribose-phosphate aldolase from Ureaplasma urealyticum serovar 10 (strain ATCC 33699 / Western).